The sequence spans 105 residues: Met repressor (105 aa).

The protein belongs to the MetJ family. As to quaternary structure, homodimer.

It localises to the cytoplasm. Functionally, this regulatory protein, when combined with SAM (S-adenosylmethionine) represses the expression of the methionine regulon and of enzymes involved in SAM synthesis. The polypeptide is Met repressor (Erwinia tasmaniensis (strain DSM 17950 / CFBP 7177 / CIP 109463 / NCPPB 4357 / Et1/99)).